The following is a 347-amino-acid chain: Phenylalanine--tRNA ligase alpha subunit (347 aa).

A Mg(2+)-binding site is contributed by Glu-261.

Belongs to the class-II aminoacyl-tRNA synthetase family. Phe-tRNA synthetase alpha subunit type 1 subfamily. As to quaternary structure, tetramer of two alpha and two beta subunits. Mg(2+) serves as cofactor.

The protein resides in the cytoplasm. The enzyme catalyses tRNA(Phe) + L-phenylalanine + ATP = L-phenylalanyl-tRNA(Phe) + AMP + diphosphate + H(+). This Streptococcus pyogenes serotype M3 (strain ATCC BAA-595 / MGAS315) protein is Phenylalanine--tRNA ligase alpha subunit.